Consider the following 800-residue polypeptide: Heterogeneous nuclear ribonucleoprotein U (800 aa).

Residue Ser-2 is modified to N-acetylserine. Ser-4 bears the Phosphoserine mark. One can recognise an SAP domain in the interval 8 to 42 (VKKLKVSELKEELKKRRLSDKGLKADLMDRLQAAL). An N6-acetyllysine mark is found at Lys-17 and Lys-21. Positions 41-257 (ALDNEAGGRP…PQPPVEEEDE (217 aa)) are disordered. A Phosphoserine modification is found at Ser-58. 2 stretches are compositionally biased toward low complexity: residues 71-80 (AGLEQEAAAG) and 103-113 (ENGAAGAADAG). Acidic residues-rich tracts occupy residues 114–128 (AMEE…ENGD) and 134–147 (EGED…EGAG). Residues 153–173 (GEQQSQPPAAAAQQQPSQQRG) show a composition bias toward low complexity. At Lys-181 the chain carries N6-acetyllysine. The residue at position 182 (Ser-182) is an ADP-ribosylserine. Residues 194–205 (APPGARQGQQQA) are compositionally biased toward low complexity. A compositionally biased stretch (basic and acidic residues) spans 209 to 242 (GKTEQKGGDKKRGVKRPREDHGRGYFEYIEENKY). Arg-231 is modified (citrulline). An N6-acetyllysine; alternate modification is found at Lys-241. Lys-241 participates in a covalent cross-link: Glycyl lysine isopeptide (Lys-Gly) (interchain with G-Cter in SUMO1); alternate. A Glycyl lysine isopeptide (Lys-Gly) (interchain with G-Cter in SUMO2); alternate cross-link involves residue Lys-241. Position 242 is a phosphotyrosine (Tyr-242). Phosphoserine is present on residues Ser-243 and Ser-247. Residues 244–440 (RAKSPQPPVE…VEFNFGQKEK (197 aa)) enclose the B30.2/SPRY domain. Phosphothreonine is present on Thr-262. The residue at position 328 (Lys-328) is an N6-acetyllysine. Residues 464 to 648 (PKGPEEKKDC…QKLLEQYKEE (185 aa)) form an ATPase domain region. A Glycyl lysine isopeptide (Lys-Gly) (interchain with G-Cter in SUMO2) cross-link involves residue Lys-471. 480-487 (GLPGAGKT) contacts ATP. 2 positions are modified to N6-acetyllysine; alternate: Lys-492 and Lys-500. Glycyl lysine isopeptide (Lys-Gly) (interchain with G-Cter in SUMO2); alternate cross-links involve residues Lys-492 and Lys-500. Thr-508 is modified (phosphothreonine). A Glycyl lysine isopeptide (Lys-Gly) (interchain with G-Cter in SUMO2) cross-link involves residue Lys-512. Lys-527 is subject to N6-acetyllysine. The residue at position 541 (Lys-541) is an N6-acetyllysine; alternate. A Glycyl lysine isopeptide (Lys-Gly) (interchain with G-Cter in SUMO2); alternate cross-link involves residue Lys-541. A Glycyl lysine isopeptide (Lys-Gly) (interchain with G-Cter in SUMO2) cross-link involves residue Lys-550. The residue at position 558 (Thr-558) is a Phosphothreonine. Glycyl lysine isopeptide (Lys-Gly) (interchain with G-Cter in SUMO2) cross-links involve residues Lys-585 and Lys-602. Residues 587-602 (EDYKQRTQKKAEVEGK) form an actin-binding region. Lys-611 carries the post-translational modification N6-acetyllysine; alternate. Residue Lys-611 forms a Glycyl lysine isopeptide (Lys-Gly) (interchain with G-Cter in SUMO2); alternate linkage. Positions 626–653 (DEITYVELQKEEAQKLLEQYKEESKKAL) form a coiled coil. Residues Lys-640 and Lys-646 each participate in a glycyl lysine isopeptide (Lys-Gly) (interchain with G-Cter in SUMO2) cross-link. Residues 647-659 (EESKKALPPEKKQ) show a composition bias toward basic and acidic residues. Positions 647-729 (EESKKALPPE…GSGGIGYPYP (83 aa)) are disordered. Arg-678 is subject to Omega-N-methylarginine. Residues 686 to 704 (GGFNMRGGNFRGGAPGNRG) show a composition bias toward gly residues. Residues 690 to 715 (MRGGNFRGGAPGNRGGYNRRGNMPQR) form an RNA-binding RGG-box region. An asymmetric dimethylarginine mark is found at Arg-691, Arg-696, and Arg-703. Asymmetric dimethylarginine; alternate occurs at positions 709 and 715. Omega-N-methylarginine; alternate occurs at positions 709 and 715. Gly residues predominate over residues 715 to 725 (RGGGGGSGGIG). 2 positions are modified to asymmetric dimethylarginine: Arg-730 and Arg-737. The interval 745-774 (NYNRGGMPNRGNYNQNFRGRGNNRGYKNQS) is disordered. Lys-789 carries the post-translational modification N6-acetyllysine; alternate. Lys-789 is covalently cross-linked (Glycyl lysine isopeptide (Lys-Gly) (interchain with G-Cter in SUMO2); alternate).

As to quaternary structure, oligomer (via ATPase domain and RNA-binding RGG-box region); oligomerization occurs upon ATP-binding in a chromatin-associated RNAs (caRNAs)- and transcription-dependent manner and is required for chromatin decompaction. ATP hydrolysis is required to cycle from an oligomeric to monomeric state to compact chromatin. Component of the coding region determinant (CRD)-mediated complex, composed of DHX9, HNRNPU, IGF2BP1, SYNCRIP and YBX1. Identified in the spliceosome C complex. Identified in a IGF2BP1-dependent mRNP granule complex containing untranslated mRNAs. Associates with heterogeneous nuclear ribonucleoprotein (hnRNP) particles. Associates (via middle region) with the C-terminal domain (CTD) RNA polymerase II (Pol II) holoenzyme; this association occurs in a RNA-independent manner. Associates (via middle region) with the core-TFIIH basal transcription factor complex; this association inhibits the CTD phosphorylation of RNA polymerase II holoenzyme by down-regulating TFIIH kinase activity. Associates with the telomerase holoenzyme complex. Associates with spindle microtubules (MTs) in a TPX2-dependent manner. Interacts (via C-terminus) with actin; this interaction is direct and mediates association with the phosphorylated CTD of RNA polymerase II and is disrupted in presence of the long non-coding H19 RNA. Interacts with AURKA. Interacts (via C-terminus) with CBX5; this interaction is, at least in part, RNA-dependent. Interacts with CR2. Interacts with CRY1. Interacts (via C-terminus) with EP300; this interaction enhances DNA-binding to nuclear scaffold/matrix attachment region (S/MAR) elements. Interacts with ERBB4. Interacts with GEMIN5. Interacts with IGF2BP1. Interacts with IGF2BP2 and IGF2BP3. Interacts with NCL; this interaction occurs during mitosis. Interacts (via C-terminus) with NR3C1 (via C-terminus). Interacts with PLK1; this interaction induces phosphorylation of HNRNPU at Ser-58 in mitosis. Interacts with POU3F4. Interacts with SMARCA4; this interaction occurs in embryonic stem cells and stimulates global Pol II-mediated transcription. Interacts (via C-terminus) with TOP2A; this interaction protects the topoisomerase TOP2A from degradation and positively regulates the relaxation of supercoiled DNA by TOP2A in a RNA-dependent manner. Interacts with TPX2; this interaction recruits HNRNPU to spindle microtubules (MTs). Interacts with UBQLN2. Interacts (via RNA-binding RGG-box region) with ZBTB7B; the interaction facilitates the recruitment of long non-coding RNA Blnc1 by ZBTB7B. Interacts with ERCC6. Post-translationally, cleaved at Asp-94 by CASP3 during T-cell apoptosis, resulting in a loss of DNA- and chromatin-binding activities. In terms of processing, extensively phosphorylated. Phosphorylated on Ser-58 by PLK1 and dephosphorylated by protein phosphatase 2A (PP2A) in mitosis. Arg-709 and Arg-715 are dimethylated, probably to asymmetric dimethylarginine. Post-translationally, citrullinated by PADI4.

The protein resides in the nucleus. It is found in the nucleus matrix. It localises to the chromosome. The protein localises to the nucleus speckle. Its subcellular location is the cytoplasm. The protein resides in the cytoskeleton. It is found in the microtubule organizing center. It localises to the centrosome. The protein localises to the centromere. Its subcellular location is the kinetochore. The protein resides in the spindle. It is found in the spindle pole. It localises to the midbody. The protein localises to the cell surface. Its subcellular location is the cytoplasmic granule. Functionally, DNA- and RNA-binding protein involved in several cellular processes such as nuclear chromatin organization, telomere-length regulation, transcription, mRNA alternative splicing and stability, Xist-mediated transcriptional silencing and mitotic cell progression. Plays a role in the regulation of interphase large-scale gene-rich chromatin organization through chromatin-associated RNAs (caRNAs) in a transcription-dependent manner, and thereby maintains genomic stability. Required for the localization of the long non-coding Xist RNA on the inactive chromosome X (Xi) and the subsequent initiation and maintenance of X-linked transcriptional gene silencing during X-inactivation. Plays a role as a RNA polymerase II (Pol II) holoenzyme transcription regulator. Promotes transcription initiation by direct association with the core-TFIIH basal transcription factor complex for the assembly of a functional pre-initiation complex with Pol II in a actin-dependent manner. Blocks Pol II transcription elongation activity by inhibiting the C-terminal domain (CTD) phosphorylation of Pol II and dissociates from Pol II pre-initiation complex prior to productive transcription elongation. Positively regulates CBX5-induced transcriptional gene silencing and retention of CBX5 in the nucleus. Negatively regulates glucocorticoid-mediated transcriptional activation. Key regulator of transcription initiation and elongation in embryonic stem cells upon leukemia inhibitory factor (LIF) signaling. Involved in the long non-coding RNA H19-mediated Pol II transcriptional repression. Participates in the circadian regulation of the core clock component BMAL1 transcription. Plays a role in the regulation of telomere length. Plays a role as a global pre-mRNA alternative splicing modulator by regulating U2 small nuclear ribonucleoprotein (snRNP) biogenesis. Plays a role in mRNA stability. Component of the CRD-mediated complex that promotes MYC mRNA stabilization. Enhances the expression of specific genes, such as tumor necrosis factor TNFA, by regulating mRNA stability, possibly through binding to the 3'-untranslated region (UTR). Plays a role in mitotic cell cycle regulation. Involved in the formation of stable mitotic spindle microtubules (MTs) attachment to kinetochore, spindle organization and chromosome congression. Phosphorylation at Ser-58 by PLK1 is required for chromosome alignement and segregation and progression through mitosis. Also contributes to the targeting of AURKA to mitotic spindle MTs. Binds to double- and single-stranded DNA and RNA, poly(A), poly(C) and poly(G) oligoribonucleotides. Binds to chromatin-associated RNAs (caRNAs). Associates with chromatin to scaffold/matrix attachment region (S/MAR) elements in a chromatin-associated RNAs (caRNAs)-dependent manner. Binds (via RNA-binding RGG-box region) to the long non-coding Xist RNA; this binding is direct and bridges the Xist RNA and the inactive chromosome X (Xi). Binds the long non-coding H19 RNA. Binds to SMN1/2 pre-mRNAs at G/U-rich regions. Binds to small nuclear RNAs (snRNAs). Binds to the 3'-UTR of TNFA mRNA. Also negatively regulates embryonic stem cell differentiation upon LIF signaling. Required for embryonic development. Binds to brown fat long non-coding RNA 1 (Blnc1); facilitates the recruitment of Blnc1 by ZBTB7B required to drive brown and beige fat development and thermogenesis. The sequence is that of Heterogeneous nuclear ribonucleoprotein U from Mus musculus (Mouse).